Reading from the N-terminus, the 621-residue chain is MTDNAPITFDGKRFAAHLSTAPGVYRMYAADDTLLYVGKAGALRKRVASYFNGTPKNTRLTAMLAQVVRMDVTITRNEAEALLLENQLIKSLTPRYNVLLRDDKSYPYVLLTREAWPRIALHRGPQIVPGRYFGPYPGVTAVRDMLNLIHKLFKLRSCEDSVFRNRSRPCLQYQIGRCSAPCVNVVTHDNYTEAVHRVTLFLEGKSDLLAEELIQAMQVASEHLEFEQAARLRDLLTSLRSMQNRQYVDGRAADLDVLACAALSGHACVLLLSFRDGRNLGTRMFFPKTNGEERTAEILSAFVSQYYAEYPPPPEILLDQEIPDHTLLEAAFSRSSAHKISLRWNVRGERAGYVELAVRNAQVALSTELTSQRAQRVRSEAVRQLLGLEGPIKRVECFDISHTMGEATVASCVVFDAVGPVRSQYRRYNITGITPGDDYAAMRQAIERRFRRAVEEDKQGERPDVLFIDGGAGQLAQAKMALNAVGVESVLLVGVSKGEERRAGHETLIMLDGQELHPGAASPALQFIQQVRDEAHRFAITGHRARRQKTRMTSKLEDIPGIGSRRRANLLKHFGGLAGVKAAGQTEIARVEGISTALAAKIYASLHGLSKNDAANASRVS.

The GIY-YIG domain occupies 20–98 (TAPGVYRMYA…IKSLTPRYNV (79 aa)). A UVR domain is found at 207–242 (DLLAEELIQAMQVASEHLEFEQAARLRDLLTSLRSM).

Belongs to the UvrC family. As to quaternary structure, interacts with UvrB in an incision complex.

The protein localises to the cytoplasm. Functionally, the UvrABC repair system catalyzes the recognition and processing of DNA lesions. UvrC both incises the 5' and 3' sides of the lesion. The N-terminal half is responsible for the 3' incision and the C-terminal half is responsible for the 5' incision. This Xylella fastidiosa (strain M23) protein is UvrABC system protein C.